The sequence spans 86 residues: Small ribosomal subunit protein uS17 (86 aa).

This sequence belongs to the universal ribosomal protein uS17 family. In terms of assembly, part of the 30S ribosomal subunit.

Its function is as follows. One of the primary rRNA binding proteins, it binds specifically to the 5'-end of 16S ribosomal RNA. The sequence is that of Small ribosomal subunit protein uS17 from Streptococcus equi subsp. equi (strain 4047).